Consider the following 318-residue polypeptide: L-lactate dehydrogenase (318 aa).

NAD(+) is bound by residues Val18, Asp39, Lys44, Tyr69, and 83 to 84 (GA). Residues Gln86 and Arg92 each contribute to the substrate site. Residues Ser105, 122-124 (VSN), and Ser147 contribute to the NAD(+) site. Substrate is bound at residue 124 to 127 (NPVD). 152–155 (DTSR) provides a ligand contact to substrate. The active-site Proton acceptor is His179. Position 225 is a phosphotyrosine (Tyr225). Thr234 is a binding site for substrate.

The protein belongs to the LDH/MDH superfamily. LDH family. In terms of assembly, homotetramer.

It is found in the cytoplasm. The enzyme catalyses (S)-lactate + NAD(+) = pyruvate + NADH + H(+). Its pathway is fermentation; pyruvate fermentation to lactate; (S)-lactate from pyruvate: step 1/1. Catalyzes the conversion of lactate to pyruvate. The polypeptide is L-lactate dehydrogenase (Clostridium botulinum (strain ATCC 19397 / Type A)).